The sequence spans 217 residues: Glycine betaine/carnitine/choline transport system permease protein OpuCB (217 aa).

An ABC transmembrane type-1 domain is found at 19–198; it reads TGEHLYISLI…ILAIIIDYVL (180 aa). The next 6 helical transmembrane spans lie at 23 to 43, 52 to 74, 84 to 101, 128 to 148, 150 to 170, and 180 to 200; these read LYIS…LGVA, GAVI…AFFI, AIVA…RNTY, LVEI…STIY, IGWA…YIFI, and IIGG…VLAV.

The protein belongs to the binding-protein-dependent transport system permease family. CysTW subfamily. As to quaternary structure, the complex is composed of two ATP-binding proteins (OpuCA), two transmembrane proteins (OpuCB and OpuCD) and a solute-binding protein (OpuCC).

The protein resides in the cell membrane. Its function is as follows. Involved in a high affinity multicomponent binding-protein-dependent transport system for glycine betaine, carnitine and choline; probably responsible for the translocation of the substrate across the membrane. This Bacillus subtilis (strain 168) protein is Glycine betaine/carnitine/choline transport system permease protein OpuCB (opuCB).